The chain runs to 124 residues: Large ribosomal subunit protein bL12 (124 aa).

This sequence belongs to the bacterial ribosomal protein bL12 family. In terms of assembly, homodimer. Part of the ribosomal stalk of the 50S ribosomal subunit. Forms a multimeric L10(L12)X complex, where L10 forms an elongated spine to which 2 to 4 L12 dimers bind in a sequential fashion. Binds GTP-bound translation factors.

In terms of biological role, forms part of the ribosomal stalk which helps the ribosome interact with GTP-bound translation factors. Is thus essential for accurate translation. This chain is Large ribosomal subunit protein bL12, found in Aromatoleum aromaticum (strain DSM 19018 / LMG 30748 / EbN1) (Azoarcus sp. (strain EbN1)).